We begin with the raw amino-acid sequence, 413 residues long: Multidrug resistance protein MdtA (413 aa).

The N-terminal stretch at 1–25 (MKNKRRTYFFQFAVLAVVIATAYFA) is a signal peptide. Residues 394–413 (ANTYDQMDKSKPSNSKVENT) form a disordered region.

This sequence belongs to the membrane fusion protein (MFP) (TC 8.A.1) family. In terms of assembly, part of a tripartite efflux system composed of MdtA, MdtB and MdtC.

It localises to the cell inner membrane. This Xenorhabdus bovienii (strain SS-2004) (Xenorhabdus nematophila subsp. bovienii) protein is Multidrug resistance protein MdtA.